We begin with the raw amino-acid sequence, 346 residues long: Phosphoribosylformylglycinamidine cyclo-ligase (346 aa).

The protein belongs to the AIR synthase family.

It is found in the cytoplasm. It carries out the reaction 2-formamido-N(1)-(5-O-phospho-beta-D-ribosyl)acetamidine + ATP = 5-amino-1-(5-phospho-beta-D-ribosyl)imidazole + ADP + phosphate + H(+). It participates in purine metabolism; IMP biosynthesis via de novo pathway; 5-amino-1-(5-phospho-D-ribosyl)imidazole from N(2)-formyl-N(1)-(5-phospho-D-ribosyl)glycinamide: step 2/2. This is Phosphoribosylformylglycinamidine cyclo-ligase from Shewanella halifaxensis (strain HAW-EB4).